A 907-amino-acid chain; its full sequence is CRM-domain containing factor CFM3B, chloroplastic (907 aa).

The N-terminal 59 residues, 1–59 (MAINSSHHFCPMTTTTTTSAKFVDSLGSSFCKFHGTSSSISLRSYRFGFSFMKNVKRLS), are a transit peptide targeting the chloroplast. 2 disordered regions span residues 62-89 (GSSS…SKVV) and 101-123 (LGVI…GSSS). Polar residues predominate over residues 70–84 (RNENWNRTQKQNQFR). 2 consecutive CRM domains span residues 220–316 (MTLS…DGSG) and 421–518 (STLG…EVGE). Residues 621–654 (SAKLVRKLERKLAFAEKKLLKAERALAKVEESLK) adopt a coiled-coil conformation. The 101-residue stretch at 663-763 (EGITEEERFM…KDYKRPTTLR (101 aa)) folds into the CRM 3 domain. Residues 824–907 (MAYSSDEETE…LQNEELDVQP (84 aa)) form a disordered region. Composition is skewed to acidic residues over residues 828–857 (SDEE…DEEG) and 868–881 (TDVE…DTDF). Positions 882–897 (GDNSASSTTPETTFVE) are enriched in polar residues.

In terms of assembly, interacts with RNA. Part of large ribonucleo-protein particles that contain CAF1 and/or CAF2, and RNC1. Interacts with RFC3 in plastids. Expressed at low levels in roots and shoots.

The protein resides in the plastid. Its subcellular location is the chloroplast. Binds specific group II introns in chloroplasts and facilitates their splicing. Exhibits non-specific action during plastid rRNA biogenesis; RFC3 prevents unaccurate splicing to improve the accuracy of plastid rRNA processing. Acts on subgroup IIB introns. The substrates of the subgroup IIB also require the CRM domain proteins CAF1 or CAF2, with a simultaneous binding of CFM3B and CAF1 or CAF2. Required for seed development. The protein is CRM-domain containing factor CFM3B, chloroplastic of Arabidopsis thaliana (Mouse-ear cress).